Here is a 329-residue protein sequence, read N- to C-terminus: Signal recognition particle receptor FtsY (329 aa).

GTP contacts are provided by residues 127-134, 209-213, and 273-276; these read GVNGVGKT, DTAGR, and TKLD.

Belongs to the GTP-binding SRP family. FtsY subfamily. Part of the signal recognition particle protein translocation system, which is composed of SRP and FtsY.

Its subcellular location is the cell membrane. It localises to the cytoplasm. The enzyme catalyses GTP + H2O = GDP + phosphate + H(+). Its function is as follows. Involved in targeting and insertion of nascent membrane proteins into the cytoplasmic membrane. Acts as a receptor for the complex formed by the signal recognition particle (SRP) and the ribosome-nascent chain (RNC). The sequence is that of Signal recognition particle receptor FtsY from Bacillus subtilis (strain 168).